The following is a 1217-amino-acid chain: Disease resistance protein RPS4 (1217 aa).

Residues proline 14 to leucine 175 enclose the TIR domain. Glutamate 88 is a catalytic residue. One can recognise an NB-ARC domain in the interval glutamate 211–glutamate 472. LRR repeat units follow at residues histidine 260–glutamate 285, proline 436–aspartate 459, leucine 614–proline 636, isoleucine 637–threonine 659, alanine 682–methionine 706, methionine 708–leucine 728, isoleucine 729–serine 749, aspartate 750–arginine 774, leucine 796–isoleucine 818, serine 819–tyrosine 842, and leucine 861–cysteine 887. The tract at residues threonine 1162–threonine 1195 is disordered. A Nuclear localization signal motif is present at residues lysine 1170–methionine 1177.

As to quaternary structure, interacts with EDS1.

Its subcellular location is the nucleus. It carries out the reaction NAD(+) + H2O = ADP-D-ribose + nicotinamide + H(+). Its function is as follows. Disease resistance (R) protein that specifically recognizes the AvrRps4 type III effector avirulence protein from Pseudomonas syringae. Resistance proteins guard the plant against pathogens that contain an appropriate avirulence protein via an indirect interaction with this avirulence protein. That triggers a defense system including the hypersensitive response, which restricts the pathogen growth. The combined presence of both regular and alternative RPS4 transcripts with truncated open reading frames (ORFs) is necessary for function. RPS4 function is regulated at multiple levels, including gene expression, alternative splicing, and protein stability. Acts as a disease resistance protein involved in resistance to fungal and bacterial pathogens, including R.solanacearum, P.syringae pv. tomato and C.higginsianum. In presence of RRS1, elicites an EDS1-dependent hypersensitive response. The protein is Disease resistance protein RPS4 of Arabidopsis thaliana (Mouse-ear cress).